Here is a 462-residue protein sequence, read N- to C-terminus: UDP-N-acetylmuramoylalanine--D-glutamate ligase (462 aa).

112–118 (GTNGKTT) provides a ligand contact to ATP.

This sequence belongs to the MurCDEF family.

It localises to the cytoplasm. The enzyme catalyses UDP-N-acetyl-alpha-D-muramoyl-L-alanine + D-glutamate + ATP = UDP-N-acetyl-alpha-D-muramoyl-L-alanyl-D-glutamate + ADP + phosphate + H(+). It participates in cell wall biogenesis; peptidoglycan biosynthesis. Its function is as follows. Cell wall formation. Catalyzes the addition of glutamate to the nucleotide precursor UDP-N-acetylmuramoyl-L-alanine (UMA). The polypeptide is UDP-N-acetylmuramoylalanine--D-glutamate ligase (Nostoc sp. (strain PCC 7120 / SAG 25.82 / UTEX 2576)).